Here is a 273-residue protein sequence, read N- to C-terminus: Large ribosomal subunit protein uL2c (273 aa).

Polar residues predominate over residues 1–31; sequence MAIHLSKTSSPSTRNGAVNSQVKSNSRNRLI. Disordered regions lie at residues 1 to 53 and 222 to 273; these read MAIH…GHRG and MNPV…RRSK.

This sequence belongs to the universal ribosomal protein uL2 family. In terms of assembly, part of the 50S ribosomal subunit.

It is found in the plastid. The protein resides in the chloroplast. The sequence is that of Large ribosomal subunit protein uL2c (rpl2) from Pisum sativum (Garden pea).